Consider the following 63-residue polypeptide: Conotoxin LeDr243 (63 aa).

A signal peptide spans 1–22 (MRCLPVFVILLLLIASTPSIDA). Positions 23–47 (RPKTKDDMPLASFNDNAKRILQILS) are excised as a propeptide. Position 60 is a cysteine amide (Cys-60). A propeptide spanning residues 62 to 63 (LG) is cleaved from the precursor.

It belongs to the conotoxin T superfamily. In terms of processing, contains 2 disulfide bonds that can be either 'C1-C3, C2-C4' or 'C1-C4, C2-C3', since these disulfide connectivities have been observed for conotoxins with cysteine framework V (for examples, see AC P0DQQ7 and AC P81755). As to expression, expressed by the venom duct.

The protein localises to the secreted. In Conus litteratus (Lettered cone), this protein is Conotoxin LeDr243.